The primary structure comprises 149 residues: UPF0179 protein Hlac_2319 (149 aa).

The protein belongs to the UPF0179 family.

The chain is UPF0179 protein Hlac_2319 from Halorubrum lacusprofundi (strain ATCC 49239 / DSM 5036 / JCM 8891 / ACAM 34).